Reading from the N-terminus, the 906-residue chain is Ribonucleoside-diphosphate reductase large subunit-like protein (906 aa).

Disordered stretches follow at residues methionine 1 to threonine 70 and valine 89 to phenylalanine 129. Residues proline 98–arginine 109 show a composition bias toward polar residues.

The protein belongs to the ribonucleoside diphosphate reductase large chain family.

It localises to the virion. Its subcellular location is the host cytoplasm. Its function is as follows. Does not possess a ribonucleotide reductase activity. Betaherpesviruses probably use another strategy to expand the dNTP pool in a quiescent host cell. This chain is Ribonucleoside-diphosphate reductase large subunit-like protein, found in Homo sapiens (Human).